Consider the following 301-residue polypeptide: Pseudouridine-5'-phosphate glycosidase (301 aa).

Residue glutamate 23 is the Proton donor of the active site. Substrate-binding residues include lysine 84 and valine 104. Aspartate 136 provides a ligand contact to Mn(2+). 138–140 (SRD) provides a ligand contact to substrate. Lysine 157 serves as the catalytic Nucleophile.

The protein belongs to the pseudouridine-5'-phosphate glycosidase family. Homotrimer. The cofactor is Mn(2+).

It carries out the reaction D-ribose 5-phosphate + uracil = psi-UMP + H2O. Functionally, catalyzes the reversible cleavage of pseudouridine 5'-phosphate (PsiMP) to ribose 5-phosphate and uracil. Functions biologically in the cleavage direction, as part of a pseudouridine degradation pathway. The chain is Pseudouridine-5'-phosphate glycosidase from Mycoplasmopsis agalactiae (strain NCTC 10123 / CIP 59.7 / PG2) (Mycoplasma agalactiae).